The sequence spans 336 residues: Ferrochelatase (336 aa).

Residues His206 and Glu287 each coordinate Fe cation.

The protein belongs to the ferrochelatase family.

It localises to the cytoplasm. It carries out the reaction heme b + 2 H(+) = protoporphyrin IX + Fe(2+). The protein operates within porphyrin-containing compound metabolism; protoheme biosynthesis; protoheme from protoporphyrin-IX: step 1/1. Its function is as follows. Catalyzes the ferrous insertion into protoporphyrin IX. This is Ferrochelatase from Neisseria meningitidis serogroup C / serotype 2a (strain ATCC 700532 / DSM 15464 / FAM18).